The chain runs to 456 residues: Phosphomethylpyrimidine synthase (456 aa).

Residues asparagine 80, methionine 109, tyrosine 139, histidine 175, 195–197 (SRG), 236–239 (DSLR), and glutamate 275 each bind substrate. A Zn(2+)-binding site is contributed by histidine 279. Residue tyrosine 302 coordinates substrate. Residue histidine 343 participates in Zn(2+) binding. Residues cysteine 423, cysteine 426, and cysteine 431 each coordinate [4Fe-4S] cluster.

It belongs to the ThiC family. [4Fe-4S] cluster serves as cofactor.

It catalyses the reaction 5-amino-1-(5-phospho-beta-D-ribosyl)imidazole + S-adenosyl-L-methionine = 4-amino-2-methyl-5-(phosphooxymethyl)pyrimidine + CO + 5'-deoxyadenosine + formate + L-methionine + 3 H(+). Its pathway is cofactor biosynthesis; thiamine diphosphate biosynthesis. Its function is as follows. Catalyzes the synthesis of the hydroxymethylpyrimidine phosphate (HMP-P) moiety of thiamine from aminoimidazole ribotide (AIR) in a radical S-adenosyl-L-methionine (SAM)-dependent reaction. This chain is Phosphomethylpyrimidine synthase, found in Synechococcus elongatus (strain ATCC 33912 / PCC 7942 / FACHB-805) (Anacystis nidulans R2).